A 311-amino-acid chain; its full sequence is Homeobox-leucine zipper protein HOX1 (311 aa).

Disordered stretches follow at residues A29 to R69 and A97 to R160. The span at S119–A145 shows a compositional bias: low complexity. The segment at residues G154–Q213 is a DNA-binding region (homeobox). Residues K212 to H256 form a leucine-zipper region. The disordered stretch occupies residues S279 to A311. Residues A280 to G289 are compositionally biased toward polar residues. The segment covering R294 to P303 has biased composition (pro residues).

It belongs to the HD-ZIP homeobox family. Class II subfamily. Homodimer. May form a heterodimer with HOX2, HOX3 or HOX7. As to expression, expressed in root provascular and vascular cylinder, provascular and vascular strands of leaves, provascular and vascular strands of the whole panicle, in mature embryo provascular bundles of scutellum and embryonic axis and provascular and vascular strands of young immature spikelet organs. Expressed in differentiating and differentiated xylem and phloem elements, and in outer and inner bundle sheath cells of all vascular bundles. Expressed in auricles, ligules, culm, guard cells brac hairs and pollen.

It is found in the nucleus. Functionally, probable transcription repressor involved leaf development. Binds to the DNA sequence 5'-CAAT[GC]ATTG-3'. May act as a regulatory switch to specify provascular cell fate. The chain is Homeobox-leucine zipper protein HOX1 (HOX1) from Oryza sativa subsp. indica (Rice).